Here is a 487-residue protein sequence, read N- to C-terminus: MRLVREARPHGREKLRSNLMEWFHWLLREAEIYDVRYPVKGAYVWRPYGMKIRRNVEALIRRLHDETGHEEVLFPVFIPYEFFGKESEHIRGFEKEVFWVSKGGEGGERLVLRPTSETAIMPMVKLWVQDYKDLPLRLYQIVSVFRAETKMTHPMIRLREISMFKEAHTVHVDREDAERQVREAVEIYKRIFDEMCLAYMINRRPDWDKFAGAVYTIAFDTVLPDGRALQIGTVHYLGTKFTEVFEVTYLAPDGSRRLAHTTSYGISERSIAAMLITHGDDAGTVIPPKLAPIQVVVVPIFYGEEEKGVVMPAAEQAAKALREAGFRVHVDGRDDKTPGWKFYYWELRGVPLRVEVGKRDVEGRQVVVARRDTLAKYAVAVDELVDAVKALLSEVEANLRRRAVEELRGRIVRVETVEAARAAIREGKVVELPWSGDNDCGLKLQELVGADALGVPMDSEASVGGFDLRDPACGKRAEVWLRLAERY.

It belongs to the class-II aminoacyl-tRNA synthetase family. ProS type 3 subfamily. In terms of assembly, homodimer.

Its subcellular location is the cytoplasm. It catalyses the reaction tRNA(Pro) + L-proline + ATP = L-prolyl-tRNA(Pro) + AMP + diphosphate. Its function is as follows. Catalyzes the attachment of proline to tRNA(Pro) in a two-step reaction: proline is first activated by ATP to form Pro-AMP and then transferred to the acceptor end of tRNA(Pro). This Pyrobaculum calidifontis (strain DSM 21063 / JCM 11548 / VA1) protein is Proline--tRNA ligase.